The primary structure comprises 292 residues: Probable alpha-L-glutamate ligase (292 aa).

Positions 104-287 (HQLLAAKGID…VATRIIEHVE (184 aa)) constitute an ATP-grasp domain. ATP-binding positions include Lys141, 178–179 (EF), Asp187, and 211–213 (RSN). Mg(2+) contacts are provided by Asp248, Glu260, and Asn262. Mn(2+) is bound by residues Asp248, Glu260, and Asn262.

It belongs to the RimK family. Requires Mg(2+) as cofactor. Mn(2+) serves as cofactor.

This chain is Probable alpha-L-glutamate ligase, found in Stenotrophomonas maltophilia (strain K279a).